The sequence spans 413 residues: Patatin-like protein 3 (413 aa).

One can recognise a PNPLA domain in the interval 54–245; sequence LSVDGGARPE…ALGNPTAAAI (192 aa). The GGXR motif lies at 58–61; that stretch reads GGAR. S100 functions as the Nucleophile in the catalytic mechanism. The tract at residues 384–413 is disordered; sequence EHGRRKQHVPPAASGGGGGGLDCHVSKKQP.

This sequence belongs to the patatin family.

Its function is as follows. Possesses non-specific lipolytic acyl hydrolase (LAH) activity. Hydrolyzes phospholipids as well as galactolipids. May play a role in disease resistance. This chain is Patatin-like protein 3 (PLP3), found in Oryza sativa subsp. indica (Rice).